The primary structure comprises 47 residues: Putative beta-neurotoxin (47 aa).

The 47-residue stretch at 1 to 47 (KEGYMGSDGCKMSCVINDQFCDTECQAKLKGSTGYCYFXGLACYXXG) folds into the LCN-type CS-alpha/beta domain. Cystine bridges form between Cys14/Cys36 and Cys21/Cys43.

In terms of tissue distribution, expressed by the venom gland.

It is found in the secreted. Causes transient paralysis of the rear legs of and spasms in insects (A.domestica). This is Putative beta-neurotoxin from Rhopalurus junceus (Caribbean blue scorpion).